The primary structure comprises 210 residues: Ion-translocating oxidoreductase complex subunit G (210 aa).

A helical transmembrane segment spans residues 9–29 (GVTLAVFAAITTGLTAVINAV). Position 175 is an FMN phosphoryl threonine (Thr175).

The protein belongs to the RnfG family. The complex is composed of six subunits: RnfA, RnfB, RnfC, RnfD, RnfE and RnfG. It depends on FMN as a cofactor.

It is found in the cell inner membrane. Part of a membrane-bound complex that couples electron transfer with translocation of ions across the membrane. The chain is Ion-translocating oxidoreductase complex subunit G from Erwinia tasmaniensis (strain DSM 17950 / CFBP 7177 / CIP 109463 / NCPPB 4357 / Et1/99).